A 309-amino-acid polypeptide reads, in one-letter code: Wall-associated proteinase (309 aa).

Asn-190 and Asn-295 each carry an N-linked (GlcNAc...) asparagine glycan.

The protein localises to the secreted. It localises to the cell wall. The protein resides in the membrane. Functionally, may participate in wall plasticization and/or intussusception or in cell wall turnover. This chain is Wall-associated proteinase, found in Coccidioides immitis (strain RS) (Valley fever fungus).